Consider the following 384-residue polypeptide: MDLFRKPKKRNAPVVRKKESSSDEDQDSEVKDVIQKRRRTNPMVQSTKQLDASTRRADNSSDDSDDSDDNQDIAVATHSFAASGDAGPSGPRDQGATATLEVDTDYSHDAQAQFERVQQQLKEGVEKDGKILYKGSALYGAKEAKDTAKGNAASGYNRVGPVRAPQFLRQTVRWDFAPDICKDYKETGFCTFGDSCKFVHDRSDYKHGWEIDEEYEAGKYGAEDDANYEIHEGDDTFPEDCFICGNPFVDPIVTKCKHYFCTGCALKSFQKSSKCPICQQNTENIMNTAKELLTYLKRKKQQQKQEAEKQEEEKDSDDDEKPHECDDHHHHDHEDEPEEPENDSNVPEAEEKSDEEQEIMMEDVEGLEGGENDSESDDDDAEKD.

A compositionally biased stretch (basic residues) spans 1–11 (MDLFRKPKKRN). The interval 1–96 (MDLFRKPKKR…GPSGPRDQGA (96 aa)) is disordered. Positions 42–52 (PMVQSTKQLDA) are enriched in polar residues. Residues 60–71 (SSDDSDDSDDNQ) are compositionally biased toward acidic residues. A C3H1-type zinc finger spans residues 175–203 (DFAPDICKDYKETGFCTFGDSCKFVHDRS). The RING-type zinc-finger motif lies at 241–279 (CFICGNPFVDPIVTKCKHYFCTGCALKSFQKSSKCPICQ). Positions 299–384 (KKQQQKQEAE…ESDDDDAEKD (86 aa)) are disordered. Composition is skewed to basic and acidic residues over residues 303-312 (QKQEAEKQEE) and 320-334 (EKPH…HDHE). Residues 351-384 (EKSDEEQEIMMEDVEGLEGGENDSESDDDDAEKD) show a composition bias toward acidic residues.

It carries out the reaction S-ubiquitinyl-[E2 ubiquitin-conjugating enzyme]-L-cysteine + [acceptor protein]-L-lysine = [E2 ubiquitin-conjugating enzyme]-L-cysteine + N(6)-ubiquitinyl-[acceptor protein]-L-lysine.. The protein operates within protein modification; protein ubiquitination. May function as E3 ubiquitin-protein ligase that catalyzes the transfer of ubiquitin onto target proteins. May play a role in DNA repair via its role in the synthesis of 'Lys-63'-linked polyubiquitin chains that recruit proteins involved in repair to sites of DNA damage by alkylating agents. The sequence is that of Probable E3 ubiquitin-protein ligase rnf113 (rnf-113) from Caenorhabditis elegans.